A 184-amino-acid chain; its full sequence is MDSPMEKFIQTYLTLLRDGDETVETSKLSESCRKEKLDMKQVNEWIALFDVDKDQKITFEEFCRGLGLKQNEMRIERNHIKTVQSGREQSLPEGVSIIASTMPKPKQVEVTQLFKDIYNEVKKDPDMNKVVKTFKSELERRYGRVWQVNAVTHSYWASFSHEPFQSIQFQYDNKIILAWRTPSN.

Residues 37 to 72 (LDMKQVNEWIALFDVDKDQKITFEEFCRGLGLKQNE) form the EF-hand domain. Ca(2+)-binding residues include Asp50, Asp52, Asp54, Lys56, and Glu61.

This chain is Antigen Sm21.7 (SM21.7), found in Schistosoma mansoni (Blood fluke).